Reading from the N-terminus, the 237-residue chain is Purine nucleoside phosphorylase DeoD-type (237 aa).

His-4 contributes to the a purine D-ribonucleoside binding site. Phosphate-binding positions include Gly-20, Arg-24, Arg-43, and 87 to 90 (RVGT). Residues 179–181 (EME) and 203–204 (SD) contribute to the a purine D-ribonucleoside site. Residue Asp-204 is the Proton donor of the active site.

This sequence belongs to the PNP/UDP phosphorylase family. In terms of assembly, homohexamer; trimer of homodimers.

The catalysed reaction is a purine D-ribonucleoside + phosphate = a purine nucleobase + alpha-D-ribose 1-phosphate. The enzyme catalyses a purine 2'-deoxy-D-ribonucleoside + phosphate = a purine nucleobase + 2-deoxy-alpha-D-ribose 1-phosphate. Catalyzes the reversible phosphorolytic breakdown of the N-glycosidic bond in the beta-(deoxy)ribonucleoside molecules, with the formation of the corresponding free purine bases and pentose-1-phosphate. This chain is Purine nucleoside phosphorylase DeoD-type, found in Clostridium beijerinckii (strain ATCC 51743 / NCIMB 8052) (Clostridium acetobutylicum).